A 133-amino-acid chain; its full sequence is Probable mitochondrial pyruvate carrier 2 (133 aa).

3 consecutive transmembrane segments (helical) span residues 40–57 (VFFW…AGLA), 73–91 (ALFA…ITPI), and 100–116 (FFVM…IAHY).

This sequence belongs to the mitochondrial pyruvate carrier (MPC) (TC 2.A.105) family.

It localises to the mitochondrion inner membrane. Functionally, may mediate the uptake of pyruvate into mitochondria. The polypeptide is Probable mitochondrial pyruvate carrier 2 (Caenorhabditis elegans).